A 275-amino-acid chain; its full sequence is 3-methyl-2-oxobutanoate hydroxymethyltransferase (275 aa).

Positions 44 and 83 each coordinate Mg(2+). Residues 44–45 (DS), Asp-83, and Lys-113 each bind 3-methyl-2-oxobutanoate. Glu-115 is a binding site for Mg(2+). The active-site Proton acceptor is Glu-182.

This sequence belongs to the PanB family. Homodecamer; pentamer of dimers. Mg(2+) serves as cofactor.

The protein localises to the cytoplasm. It catalyses the reaction 3-methyl-2-oxobutanoate + (6R)-5,10-methylene-5,6,7,8-tetrahydrofolate + H2O = 2-dehydropantoate + (6S)-5,6,7,8-tetrahydrofolate. The protein operates within cofactor biosynthesis; (R)-pantothenate biosynthesis; (R)-pantoate from 3-methyl-2-oxobutanoate: step 1/2. In terms of biological role, catalyzes the reversible reaction in which hydroxymethyl group from 5,10-methylenetetrahydrofolate is transferred onto alpha-ketoisovalerate to form ketopantoate. This chain is 3-methyl-2-oxobutanoate hydroxymethyltransferase, found in Clostridioides difficile (strain 630) (Peptoclostridium difficile).